A 321-amino-acid chain; its full sequence is Phosphatidate cytidylyltransferase, mitochondrial (321 aa).

This sequence belongs to the TAM41 family. Mg(2+) is required as a cofactor. It depends on Co(2+) as a cofactor. The cofactor is Cu(2+).

It localises to the mitochondrion inner membrane. The catalysed reaction is a 1,2-diacyl-sn-glycero-3-phosphate + CTP + H(+) = a CDP-1,2-diacyl-sn-glycerol + diphosphate. It participates in phospholipid metabolism; CDP-diacylglycerol biosynthesis; CDP-diacylglycerol from sn-glycerol 3-phosphate: step 3/3. Its function is as follows. Catalyzes the formation of CDP-diacylglycerol (CDP-DAG) from phosphatidic acid (PA) in the mitochondrial inner membrane. Required for the biosynthesis of the dimeric phospholipid cardiolipin, which stabilizes supercomplexes of the mitochondrial respiratory chain in the mitochondrial inner membrane. The protein is Phosphatidate cytidylyltransferase, mitochondrial of Caenorhabditis elegans.